The following is a 391-amino-acid chain: Putative gustatory receptor 36a (391 aa).

The Cytoplasmic segment spans residues 1-3; the sequence is MFD. Residues 4–24 form a helical membrane-spanning segment; that stretch reads WVGLLLKVLYYYGQIIGLINF. Topologically, residues 25–38 are extracellular; sequence EIDWQRGRVVAAQR. Residues 39-59 form a helical membrane-spanning segment; it reads GILFAIAINVLICMVLLLQIS. Residues 60 to 73 lie on the Cytoplasmic side of the membrane; the sequence is KKFNLDVYFGRANQ. The helical transmembrane segment at 74-94 threads the bilayer; the sequence is LHQYVIIVMVSLRMASGISAI. The Extracellular portion of the chain corresponds to 95-126; that stretch reads LNRWRQRAQLMRLVECVLRLFLKKPHVKQMSR. Residues 127–147 form a helical membrane-spanning segment; the sequence is WAILVKFSVGVVSNFLQMAIS. Residues 148 to 165 lie on the Cytoplasmic side of the membrane; it reads MESLDRLGFNEFVGMASD. A helical transmembrane segment spans residues 166–186; that stretch reads FWMSAIINMAISQHYLVILFV. At 187-247 the chain is on the extracellular side; that stretch reads RAYYHLLKTE…LQSIVTQLNQ (61 aa). A helical transmembrane segment spans residues 248 to 268; it reads VFGIQGIMVYGGYYIFSVATT. The Cytoplasmic segment spans residues 269-290; sequence YITYSLAINGIEELHLSVRAAA. The chain crosses the membrane as a helical span at residues 291–311; it reads LVFSWFLFYYTSAILNLFVML. Residues 312–391 lie on the Extracellular side of the membrane; it reads KLFDDHKEME…FLIQYDMEYF (80 aa).

It belongs to the insect chemoreceptor superfamily. Gustatory receptor (GR) family. Gr22e subfamily.

It is found in the cell membrane. Functionally, probable gustatory receptor which mediates acceptance or avoidance behavior, depending on its substrates. This is Putative gustatory receptor 36a (Gr36a) from Drosophila melanogaster (Fruit fly).